Reading from the N-terminus, the 184-residue chain is Protein Syd (184 aa).

Belongs to the Syd family.

It is found in the cell inner membrane. Functionally, interacts with the SecY protein in vivo. May bind preferentially to an uncomplexed state of SecY, thus functioning either as a chelating agent for excess SecY in the cell or as a regulatory factor that negatively controls the translocase function. The protein is Protein Syd of Edwardsiella ictaluri (strain 93-146).